The primary structure comprises 206 residues: 3-isopropylmalate dehydratase small subunit (206 aa).

The protein belongs to the LeuD family. LeuD type 1 subfamily. In terms of assembly, heterodimer of LeuC and LeuD.

The enzyme catalyses (2R,3S)-3-isopropylmalate = (2S)-2-isopropylmalate. The protein operates within amino-acid biosynthesis; L-leucine biosynthesis; L-leucine from 3-methyl-2-oxobutanoate: step 2/4. In terms of biological role, catalyzes the isomerization between 2-isopropylmalate and 3-isopropylmalate, via the formation of 2-isopropylmaleate. The protein is 3-isopropylmalate dehydratase small subunit of Leptospira interrogans serogroup Icterohaemorrhagiae serovar copenhageni (strain Fiocruz L1-130).